The chain runs to 49 residues: Osteocalcin (49 aa).

In terms of domain architecture, Gla spans 1–47; sequence YLDHWLGAPAPYPDPLEPRREVCELNPDCDELADHIGFQEAYRRFYG. At Pro-9 the chain carries Hydroxyproline. 4 residues coordinate Ca(2+): Glu-17, Glu-21, Glu-24, and Asp-30. 4-carboxyglutamate occurs at positions 17, 21, and 24. Cys-23 and Cys-29 are disulfide-bonded.

The protein belongs to the osteocalcin/matrix Gla protein family. In terms of processing, gamma-carboxyglutamate residues are formed by vitamin K dependent carboxylation by GGCX. These residues are essential for the binding of calcium. Decarboxylation promotes the hormone activity.

The protein localises to the secreted. Functionally, the carboxylated form is one of the main organic components of the bone matrix, which constitutes 1-2% of the total bone protein. It acts as a negative regulator of bone formation and is required to limit bone formation without impairing bone resorption or mineralization. The carboxylated form binds strongly to apatite and calcium. In terms of biological role, the uncarboxylated form acts as a hormone secreted by osteoblasts, which regulates different cellular processes, such as energy metabolism, male fertility and brain development. Regulates of energy metabolism by acting as a hormone favoring pancreatic beta-cell proliferation, insulin secretion and sensitivity and energy expenditure. Uncarboxylated osteocalcin hormone also promotes testosterone production in the testes: acts as a ligand for G protein-coupled receptor GPRC6A at the surface of Leydig cells, initiating a signaling response that promotes the expression of enzymes required for testosterone synthesis in a CREB-dependent manner. Also acts as a regulator of brain development: osteocalcin hormone crosses the blood-brain barrier and acts as a ligand for GPR158 on neurons, initiating a signaling response that prevents neuronal apoptosis in the hippocampus, favors the synthesis of all monoamine neurotransmitters and inhibits that of gamma-aminobutyric acid (GABA). Osteocalcin also crosses the placenta during pregnancy and maternal osteocalcin is required for fetal brain development. This is Osteocalcin (BGLAP) from Equus caballus (Horse).